The primary structure comprises 106 residues: Large ribosomal subunit protein eL42 (106 aa).

The interval 34–53 (YAQGRRRYDRKRSGYGGQTK) is disordered. At Lys-53 the chain carries N6-methyllysine.

Belongs to the eukaryotic ribosomal protein eL42 family.

The protein localises to the cytoplasm. This chain is Large ribosomal subunit protein eL42 (RPL36AL), found in Pongo abelii (Sumatran orangutan).